We begin with the raw amino-acid sequence, 246 residues long: Trypsin-5 (246 aa).

Positions 1–15 (MNSLLFLALVGAAVA) are cleaved as a signal peptide. The propeptide at 16 to 23 (FPVDDDDK) is activation peptide. In terms of domain architecture, Peptidase S1 spans 24–244 (IVGGYTCREN…YVDWIQDTIA (221 aa)). An intrachain disulfide couples cysteine 48 to cysteine 64. Active-site charge relay system residues include histidine 63 and aspartate 107. Disulfide bonds link cysteine 139/cysteine 206, cysteine 171/cysteine 185, and cysteine 196/cysteine 220. Residue serine 200 is the Charge relay system of the active site.

The protein belongs to the peptidase S1 family. Proteolytically cleaved and activated by an autocatalytic mechanism. Cleavage by CTRC inhibits autoactivation. Expressed in the heart, lung, brain, kidney, liver, epididymis, ovary and uterus. Expression in the testis is limited to round and elongating spermatids.

The protein resides in the cytoplasmic vesicle. It is found in the secretory vesicle. Its subcellular location is the acrosome. The enzyme catalyses Preferential cleavage: Arg-|-Xaa, Lys-|-Xaa.. Activated by autocatalytic cleavage. Cleavage by CTRC inhibits autoactivation. Functionally, serine protease capable of autoactivation. This chain is Trypsin-5, found in Mus musculus (Mouse).